Consider the following 197-residue polypeptide: Fucoxanthin-chlorophyll a-c binding protein E, chloroplastic (197 aa).

A chloroplast-targeting transit peptide spans 1 to 31 (MKFVVFASLLASAARFAPAQQSARTSVATNM). Helical transmembrane passes span 73–94 (ISML…PGDI), 114–134 (ISGA…LAVM), and 174–196 (GRAA…SLIP).

It belongs to the fucoxanthin chlorophyll protein family. As to quaternary structure, the LHC complex of chromophytic algae is composed of fucoxanthin, chlorophyll A and C bound non-covalently by fucoxanthin chlorophyll proteins (FCPs). The ratio of the pigments in LHC; fucoxanthin: chlorophyll C: chlorophyll A; (0.6-1): (0.1-0.3): (1).

The protein localises to the plastid. Its subcellular location is the chloroplast thylakoid membrane. The light-harvesting complex (LHC) functions as a light receptor, it captures and delivers excitation energy to photosystems with which it is closely associated. Energy is transferred from the carotenoid and chlorophyll C (or B) to chlorophyll A and the photosynthetic reaction centers where it is used to synthesize ATP and reducing power. The chain is Fucoxanthin-chlorophyll a-c binding protein E, chloroplastic (FCPE) from Phaeodactylum tricornutum (Diatom).